A 410-amino-acid chain; its full sequence is L-sorbose 1-phosphate reductase (410 aa).

Cys-40, His-69, and Glu-70 together coordinate Zn(2+). NAD(+) is bound by residues Arg-221 and 309–310; that span reads GT.

This sequence belongs to the zinc-containing alcohol dehydrogenase family. The cofactor is Zn(2+).

Its function is as follows. Reduces L-sorbose 1-phosphate to D-glucitol 6-phosphate. The sequence is that of L-sorbose 1-phosphate reductase (sorE) from Klebsiella pneumoniae.